We begin with the raw amino-acid sequence, 123 residues long: Pre-B lymphocyte protein 3 (123 aa).

The signal sequence occupies residues 1–20 (MACRCLSFLLMGTFLSVSQT). In terms of domain architecture, Ig-like spans 21-123 (VLAQLDALLV…YCSVGYGFSP (103 aa)). The cysteines at positions 40 and 115 are disulfide-linked.

This sequence belongs to the immunoglobulin superfamily. In terms of tissue distribution, expressed in B-cell precursors. Expressed in fetal liver, bone marrow, spleen and lymph node.

Associates with the Ig-mu chain to form a molecular complex that is expressed on the surface of pre-B-cells. This chain is Pre-B lymphocyte protein 3 (VPREB3), found in Homo sapiens (Human).